Consider the following 514-residue polypeptide: Butyrophilin subfamily 2 member A2 (514 aa).

The first 29 residues, 1–29 (MEPTTSLRSCPIASLLFFLVLSLFVLVSA), serve as a signal peptide directing secretion. Residues 30–142 (QFTVIGPAEP…SYDQATMKLM (113 aa)) form the Ig-like V-type domain. Residues 30–244 (QFTVIGPAEP…ILIPESFVPS (215 aa)) lie on the Extracellular side of the membrane. 2 N-linked (GlcNAc...) asparagine glycosylation sites follow: Asn47 and Asn115. 2 disulfide bridges follow: Cys52–Cys126 and Cys166–Cys220. The 83-residue stretch at 150 to 232 (PLIKMKTLED…NNTLLSQEVE (83 aa)) folds into the Ig-like C2-type domain. Residues 245–265 (LPLWMVAVAVTLPVVMLILLT) traverse the membrane as a helical segment. The Cytoplasmic portion of the chain corresponds to 266–514 (SGSICLVKKH…PISQSLVRKP (249 aa)). Positions 281-304 (ILSAEKEAEYEEKEAARQLQEELR) form a coiled coil. Residues 295-488 (AARQLQEELR…LFICPAFTGA (194 aa)) enclose the B30.2/SPRY domain.

The protein belongs to the immunoglobulin superfamily. BTN/MOG family. In terms of processing, N-glycosylated. As to expression, widely expressed (at protein level). In the thymus, restricted to the corticomedullary junction, but not confined solely to epithelial cells (at protein level). Significant expression on naive B-cells, splenic natural killer cells, dendritic cells and peritoneal macrophages (at protein level). Negligible expression on naive T-cells up-regulated on activated T-cells (at protein level).

The protein resides in the membrane. Its function is as follows. Inhibits the proliferation of CD4 and CD8 T-cells activated by anti-CD3 antibodies, T-cell metabolism and IL2 and IFNG secretion. The sequence is that of Butyrophilin subfamily 2 member A2 (Btn2a2) from Mus musculus (Mouse).